The following is a 427-amino-acid chain: Putative FBD-associated F-box protein At3g50710 (427 aa).

One can recognise an F-box domain in the interval 1 to 53 (MDRISNLSDDLLLKIVSSLPTKDVVVTMLLSKRWKFLWMMVPKLRFDDEFELE). The FBD domain occupies 345–395 (HWEEPSSVPQCLLFHLNIFEWKYYNAGDEEKKVVAYILKNARQLKTATFSA).

This chain is Putative FBD-associated F-box protein At3g50710, found in Arabidopsis thaliana (Mouse-ear cress).